A 410-amino-acid chain; its full sequence is MKRTHLFIAGLYLLASCRAEEGLNFPTYDGKDRVVSLTEKNFKQVLKKYDVLCLYYHESVSSDKVAQKQFQLKEIVLELVAQVLEHKDIGFVMVDAKKEAKLAKKLGFDEEGSLYVLKGDRTIEFDGEFAADVLVEFLLDLIEDPVEIINSKLEVQAFERIEDQIKLIGFFKSEESEYYKAFEEAAEHFQPYIKFFATFDKGVAKKLSLKMNEVDFYEPFMDEPIAIPDKPYTEEELVEFVKEHQRPTLRRLRPEDMFETWEDDLNGIHIVAFAERSDPDGYEFLEILKQVARDNTDNPDLSIVWIDPDDFPLLVAYWEKTFKIDLFKPQIGVVNVTDADSVWMEIPDDDDLPTAEELEDWIEDVLSGKINTEDDDNEEGDDGDDDEDDDDDDGNNSDEESNDDSDDDDE.

The N-terminal stretch at 1–19 is a signal peptide; sequence MKRTHLFIAGLYLLASCRA. Residues 221–242 are calcium regulated hydrophobic site; the sequence is MDEPIAIPDKPYTEEELVEFVK. Tyr282 bears the Phosphotyrosine mark. N-linked (GlcNAc...) asparagine glycans are attached at residues Asn335 and Asn395. The tract at residues 364–410 is disordered; the sequence is DVLSGKINTEDDDNEEGDDGDDDEDDDDDDGNNSDEESNDDSDDDDE. Acidic residues predominate over residues 373–410; that stretch reads EDDDNEEGDDGDDDEDDDDDDGNNSDEESNDDSDDDDE. Residues Ser397, Ser401, and Ser405 each carry the phosphoserine; by CK2 modification.

Belongs to the calsequestrin family. In terms of assembly, interacts with ASPH. Monomer, homodimer and homooligomer. Mostly monomeric in the absence of calcium. Forms higher oligomers in a calcium-dependent manner. Dimers associate to form tetramers, that then form linear homomer chains. Interacts with TRDN. In terms of processing, phosphorylation in the C-terminus, probably by CK2, moderately increases calcium buffering capacity. N-glycosylated. As to expression, detected in heart muscle (at protein level).

The protein resides in the sarcoplasmic reticulum lumen. Functionally, calsequestrin is a high-capacity, moderate affinity, calcium-binding protein and thus acts as an internal calcium store in muscle. Calcium ions are bound by clusters of acidic residues at the protein surface, especially at the interface between subunits. Can bind around 60 Ca(2+) ions. Regulates the release of lumenal Ca(2+) via the calcium release channel RYR2; this plays an important role in triggering muscle contraction. Plays a role in excitation-contraction coupling in the heart and in regulating the rate of heart beats. In Canis lupus familiaris (Dog), this protein is Calsequestrin-2 (CASQ2).